The chain runs to 950 residues: Inactive atromentin synthetase invA4 (950 aa).

The interval 37 to 460 (SRAVSQYPNH…SGRIKDTVVV (424 aa)) is adenylation (A) domain. In terms of domain architecture, Carrier spans 592 to 670 (APSTETEKTL…TLAKYVDSLV (79 aa)). The tract at residues 597 to 667 (TEKTLAGIYA…EIITLAKYVD (71 aa)) is thiolation and peptide carrier (T) domain. The residue at position 629 (Ser-629) is an O-(pantetheine 4'-phosphoryl)serine. The segment at 693-797 (PIFMVHPGIG…GIIDMIPHHM (105 aa)) is thioesterase (TE) domain.

This sequence belongs to the ATP-dependent AMP-binding enzyme family.

Functionally, inactive atromentin synthetase homolog. Does not accept 4-hydroxyphenylpyruvate (4-HPP) as substrate. The protein is Inactive atromentin synthetase invA4 (invA4) of Paxillus involutus (Naked brimcap).